A 651-amino-acid polypeptide reads, in one-letter code: Nucleolin (651 aa).

Low complexity predominate over residues 1–11 (MVKLAKGAKTQ). Residues 1 to 230 (MVKLAKGAKT…AKKTKTDTAS (230 aa)) form a disordered region. A compositionally biased stretch (acidic residues) spans 26–45 (EDSEEEEDMEEDDSSDEEVE). Positions 54 to 79 (KKTATPAKATPGKAATPGKKGATPAK) are enriched in low complexity. Positions 89–101 (SEEEEDDSDEEAE) are enriched in acidic residues. Over residues 106–116 (IKNKPVAKKAV) the composition is skewed to basic residues. 3 stretches are compositionally biased toward acidic residues: residues 122-134 (SEED…ESEE), 155-168 (SEEE…DEPM), and 183-204 (AEED…EEEQ). Serine 155 carries the phosphoserine modification. Over residues 219 to 228 (PEAKKTKTDT) the composition is skewed to basic and acidic residues. 4 consecutive RRM domains span residues 233-309 (LSIF…KAMA), 325-399 (RTLF…FTGE), 415-488 (KVLV…FSQG), and 503-578 (KTLF…FAKP). The segment at 574–651 (DFAKPKGDSQ…GQGKKMRFDD (78 aa)) is disordered. Over residues 585-644 (GGRGGFGRGGGFRGGRGGRGGGGGRGFGGRGGGRGRGGFGGRGGGGFRGGQGGGFRGGQG) the composition is skewed to gly residues.

Its subcellular location is the nucleus. It localises to the nucleolus. In terms of biological role, nucleolin is the major nucleolar protein of growing eukaryotic cells. It is found associated with intranucleolar chromatin and pre-ribosomal particles. It induces chromatin decondensation by binding to histone H1. It is thought to play a role in pre-rRNA transcription and ribosome assembly. The protein is Nucleolin (ncl) of Xenopus laevis (African clawed frog).